Here is a 285-residue protein sequence, read N- to C-terminus: MLLTRRFSSALARSPLLPRSLPPPRAVPATPPAPRPPPRRLMSSSSSGWHHSSRPPPPPPSGADKDQLFRGLEAALGTTFSSEPLAPPPQPMILVISGPSGVGKDAVIQRLQEEREGMHFVVTATSRAKRPGEVDGKDYYFVTKEEFLTMIERKELLEYALVYGEYKGIPKQQIRDYMAKGYDIVLRVDIQGAATLREILGESAIFIFLVAESEEALVKRLIHRKTETSDMLLVRVATAREEVKRMNNFDYVVVNSEGNLEGAVKQVESIIDAEKAKVHKRTVNI.

Over residues 1-19 (MLLTRRFSSALARSPLLPR) the composition is skewed to low complexity. A chloroplast and mitochondrion-targeting transit peptide spans 1-42 (MLLTRRFSSALARSPLLPRSLPPPRAVPATPPAPRPPPRRLM). The interval 1–66 (MLLTRRFSSA…PPPPSGADKD (66 aa)) is disordered. Residues 20–36 (SLPPPRAVPATPPAPRP) show a composition bias toward pro residues. A compositionally biased stretch (low complexity) spans 40-50 (RLMSSSSSGWH). The 182-residue stretch at 91–272 (PMILVISGPS…AVKQVESIID (182 aa)) folds into the Guanylate kinase-like domain. Residue 98-105 (GPSGVGKD) participates in ATP binding. Catalysis depends on residues Arg130, Arg224, and Arg235. Asn255 serves as a coordination point for ATP.

The protein belongs to the guanylate kinase family. In terms of assembly, monomer.

It localises to the plastid. Its subcellular location is the chloroplast. The protein localises to the mitochondrion. The catalysed reaction is GMP + ATP = GDP + ADP. In terms of biological role, essential for recycling GMP and indirectly, cGMP. Essential for chloroplast differentiation at early stage of leaf development. May not be involved in the synthesis and maintenance of the organellar DNA during leaf development. This chain is Guanylate kinase 2, chloroplastic/mitochondrial (V2), found in Oryza sativa subsp. japonica (Rice).